A 326-amino-acid polypeptide reads, in one-letter code: Eukaryotic translation initiation factor 3 subunit I (326 aa).

WD repeat units lie at residues 8 to 47 (GHER…RLGT), 50 to 89 (GHQG…VIAS), 145 to 184 (MTES…KVVD), 188 to 227 (DHSA…CLKT), and 285 to 326 (GHFG…NIFE).

It belongs to the eIF-3 subunit I family. In terms of assembly, component of the eukaryotic translation initiation factor 3 (eIF-3) complex. The eIF-3 complex interacts with pix.

It is found in the cytoplasm. Functionally, component of the eukaryotic translation initiation factor 3 (eIF-3) complex, which is involved in protein synthesis of a specialized repertoire of mRNAs and, together with other initiation factors, stimulates binding of mRNA and methionyl-tRNAi to the 40S ribosome. The eIF-3 complex specifically targets and initiates translation of a subset of mRNAs involved in cell proliferation. This Drosophila simulans (Fruit fly) protein is Eukaryotic translation initiation factor 3 subunit I.